A 491-amino-acid polypeptide reads, in one-letter code: Trypanothione reductase (491 aa).

35–52 contacts FAD; sequence DVQATHGPPALVALGGTC. Cys52 and Cys57 form a disulfide bridge. The active-site Proton acceptor is the His461.

This sequence belongs to the class-I pyridine nucleotide-disulfide oxidoreductase family. In terms of assembly, homodimer. Requires FAD as cofactor.

The protein resides in the cytoplasm. The catalysed reaction is trypanothione + NADP(+) = trypanothione disulfide + NADPH + H(+). Its function is as follows. Trypanothione is the parasite analog of glutathione; this enzyme is the equivalent of glutathione reductase. The protein is Trypanothione reductase (TPR) of Leishmania donovani.